Reading from the N-terminus, the 176-residue chain is Large ribosomal subunit protein uL6 (176 aa).

It belongs to the universal ribosomal protein uL6 family. As to quaternary structure, part of the 50S ribosomal subunit.

Functionally, this protein binds to the 23S rRNA, and is important in its secondary structure. It is located near the subunit interface in the base of the L7/L12 stalk, and near the tRNA binding site of the peptidyltransferase center. The polypeptide is Large ribosomal subunit protein uL6 (Burkholderia ambifaria (strain MC40-6)).